The following is a 269-amino-acid chain: Signal recognition particle receptor subunit beta (269 aa).

The helical transmembrane segment at 35-55 (LLSVAVAVLAVLLTLVFWKFI) threads the bilayer. Residues 69 to 77 (GLCDSGKTL) and 90 to 93 (TQTS) contribute to the GTP site. A Phosphoserine modification is found at S110. Residue G118 participates in GTP binding. The residue at position 212 (T212) is a Phosphothreonine. Position 246 (A246) interacts with GTP.

This sequence belongs to the SRP receptor beta subunit family. As to quaternary structure, heterodimer with SRPRA.

Its subcellular location is the endoplasmic reticulum membrane. Functionally, component of the signal recognition particle (SRP) complex receptor (SR). Ensures, in conjunction with the SRP complex, the correct targeting of the nascent secretory proteins to the endoplasmic reticulum membrane system. May mediate the membrane association of SR. This Rattus norvegicus (Rat) protein is Signal recognition particle receptor subunit beta (Srprb).